Here is a 256-residue protein sequence, read N- to C-terminus: Omega-amidase YafV (256 aa).

Residues 4-234 (LKITLLQQPL…ATRIDAELSM (231 aa)) form the CN hydrolase domain. Glu-42 acts as the Proton acceptor in catalysis. Lys-107 acts as the Proton donor in catalysis. Cys-141 acts as the Nucleophile in catalysis.

This sequence belongs to the carbon-nitrogen hydrolase superfamily. NIT1/NIT2 family.

It carries out the reaction a monoamide of a dicarboxylate + H2O = a dicarboxylate + NH4(+). In terms of biological role, hydrolyzes alpha-ketoglutaramate (a-KGM) to alpha-ketoglutarate (alpha-KG) and ammonia, has weak activity on L-glutamine, almost no activity on deaminated glutathione (dGSH) and none on glutathione. May function as a metabolite repair enzyme. This chain is Omega-amidase YafV (yafV), found in Escherichia coli (strain K12).